The following is a 550-amino-acid chain: Hydroxylamine reductase (550 aa).

4 residues coordinate [2Fe-2S] cluster: C3, C6, C18, and C25. Residues H249, E273, C317, C405, C433, C458, E492, and K494 each contribute to the hybrid [4Fe-2O-2S] cluster site. The residue at position 405 (C405) is a Cysteine persulfide.

This sequence belongs to the HCP family. [2Fe-2S] cluster is required as a cofactor. The cofactor is hybrid [4Fe-2O-2S] cluster.

The protein resides in the cytoplasm. It catalyses the reaction A + NH4(+) + H2O = hydroxylamine + AH2 + H(+). In terms of biological role, catalyzes the reduction of hydroxylamine to form NH(3) and H(2)O. The polypeptide is Hydroxylamine reductase (Salmonella typhimurium (strain LT2 / SGSC1412 / ATCC 700720)).